A 250-amino-acid chain; its full sequence is 3-deoxy-manno-octulosonate cytidylyltransferase (250 aa).

This sequence belongs to the KdsB family.

It localises to the cytoplasm. It catalyses the reaction 3-deoxy-alpha-D-manno-oct-2-ulosonate + CTP = CMP-3-deoxy-beta-D-manno-octulosonate + diphosphate. It participates in nucleotide-sugar biosynthesis; CMP-3-deoxy-D-manno-octulosonate biosynthesis; CMP-3-deoxy-D-manno-octulosonate from 3-deoxy-D-manno-octulosonate and CTP: step 1/1. Its pathway is bacterial outer membrane biogenesis; lipopolysaccharide biosynthesis. Activates KDO (a required 8-carbon sugar) for incorporation into bacterial lipopolysaccharide in Gram-negative bacteria. This is 3-deoxy-manno-octulosonate cytidylyltransferase from Yersinia pseudotuberculosis serotype O:1b (strain IP 31758).